A 156-amino-acid polypeptide reads, in one-letter code: CD-NTase/cGAS isopeptidase (156 aa).

Residues 16–156 (LVVIMGHVVT…LITVFKKIES (141 aa)) form the MPN domain. The Proton donor/acceptor role is filled by glutamate 39. The Zn(2+) site is built by histidine 101, histidine 103, and aspartate 114. Positions 101 to 114 (HTHPEDRPFPSATD) match the JAMM motif motif.

Belongs to the peptidase M67B family. Cap3 isopeptidase subfamily. The cofactor is Zn(2+).

With respect to regulation, cleavage of conjugated proteins is inhibited by EDTA. In terms of biological role, metalloprotease priming reversal component of a CBASS system. CBASS (cyclic oligonucleotide-based antiphage signaling system) provides immunity against bacteriophages. The CD-NTase protein (DncV) synthesizes cyclic nucleotides in response to infection; these serve as specific second messenger signals. The signals activate a diverse range of effectors, leading to bacterial cell death and thus abortive phage infection. A type II-A(GA) CBASS system. Functionally, reverses the primed state of DncV, the CD-NTase. Cleaves a DncV-GFP (green fluorescent protein) fusion protein precisely at the C-terminus of DncV. Overexpression decreases the efficacy of CBASS protection against phages T2, T4, T5 and T6, blocks formation of DncV-conjugates in vivo, and inhibits in vivo activation of DncV. Antagonism of phage defense upon overexpression is CBASS-system specific, Cap3 from this bacteria only antagonizes its cognate CBASS system and not that of C.freundii, E.coli or E.hormaechei. Its function is as follows. Protects E.coli against phage infection. When the CBASS operon (capV-dncV-cap2-cap3) is introduced in E.coli MG1655 there is about 100-fold protection against phages P1 and T2. When the operon is introduced in E.coli MG1655 there is a more than 10(3) decrease in the efficiency of T2 plaque formation. Protects 100-fold against phage T5, offers no protection against T7. When the operon is introduced in E.coli MG1655 it protects against phages T2, T4, T5 and T6. Another paper shows the operon confers protection against phages P1, T2, T5 and T6 but not T4 or lambda. This is CD-NTase/cGAS isopeptidase from Vibrio cholerae serotype O1 (strain ATCC 39315 / El Tor Inaba N16961).